An 832-amino-acid chain; its full sequence is Tuftelin-interacting protein 11 (832 aa).

Disordered regions lie at residues Met-1–Ile-21 and Asn-33–Glu-145. Composition is skewed to basic and acidic residues over residues Asn-36–Ala-49 and Thr-88–Ser-99. Polar residues predominate over residues Thr-121 to Arg-130. The region spanning Thr-148–Ser-194 is the G-patch domain. A Phosphoserine modification is found at Ser-209.

The protein belongs to the TFP11/STIP family. In terms of assembly, identified in the spliceosome C complex.

It localises to the nucleus. In terms of biological role, involved in pre-mRNA splicing, specifically in spliceosome disassembly during late-stage splicing events. This chain is Tuftelin-interacting protein 11 (tfip11), found in Danio rerio (Zebrafish).